The sequence spans 263 residues: 3-methyl-2-oxobutanoate hydroxymethyltransferase (263 aa).

Mg(2+) is bound by residues Asp45 and Asp84. 3-methyl-2-oxobutanoate is bound by residues 45 to 46 (DS), Asp84, and Lys112. Residue Glu114 participates in Mg(2+) binding. The active-site Proton acceptor is the Glu180.

The protein belongs to the PanB family. In terms of assembly, homodecamer; pentamer of dimers. The cofactor is Mg(2+).

The protein localises to the cytoplasm. It catalyses the reaction 3-methyl-2-oxobutanoate + (6R)-5,10-methylene-5,6,7,8-tetrahydrofolate + H2O = 2-dehydropantoate + (6S)-5,6,7,8-tetrahydrofolate. Its pathway is cofactor biosynthesis; (R)-pantothenate biosynthesis; (R)-pantoate from 3-methyl-2-oxobutanoate: step 1/2. Catalyzes the reversible reaction in which hydroxymethyl group from 5,10-methylenetetrahydrofolate is transferred onto alpha-ketoisovalerate to form ketopantoate. In Salmonella agona (strain SL483), this protein is 3-methyl-2-oxobutanoate hydroxymethyltransferase.